The sequence spans 410 residues: ORC1-type DNA replication protein 4 (410 aa).

ATP-binding positions include 73–77, Y220, and R232; that span reads TGKSL.

The protein belongs to the CDC6/cdc18 family.

Its function is as follows. Involved in regulation of DNA replication. The sequence is that of ORC1-type DNA replication protein 4 (orc4) from Halobacterium salinarum (strain ATCC 700922 / JCM 11081 / NRC-1) (Halobacterium halobium).